Here is a 1272-residue protein sequence, read N- to C-terminus: Fused isobutyryl-CoA mutase (1272 aa).

Positions 20 to 158 constitute a B12-binding domain; it reads RLRFVTAAAL…ARCAEGARAA (139 aa). An adenosylcob(III)alamin-binding site is contributed by His-33. A GTPase chaperone MeaI region spans residues 163 to 536; that stretch reads ESQVGAWAAE…YRHVAEALRK (374 aa). The tract at residues 193–240 is disordered; it reads GAVARNPSSEASRVAAAGRGDHLDRGVRAASTADTADTANTANTANTA. Low complexity predominate over residues 221–240; the sequence is AASTADTADTANTANTANTA. Position 334-339 (334-339) interacts with GTP; the sequence is GAGKSS. The Mg(2+) site is built by Ser-338, Ile-363, Asp-364, and Asp-377. Arg-380 contributes to the GTP binding site. Positions 429 and 430 each coordinate Mg(2+). Residue 476 to 479 coordinates GTP; the sequence is NKFD. The tract at residues 537 to 758 is linker; sequence HGLRSGGGRL…MLDNLPGYFP (222 aa). 2 stretches are compositionally biased toward low complexity: residues 614 to 631 and 639 to 663; these read TVAT…KANA and ANAS…ATPT. Residues 614 to 667 are disordered; sequence TVATSASPGASASSKANACTSTSSKANASPGANTTANSNASATSGTATPTDALN. Substrate is bound by residues Phe-766, Arg-801, Arg-907, Tyr-951, Ser-1000, Arg-1035, and Lys-1040. The GTP site is built by Glu-1152 and Asn-1271.

The protein belongs to the IcmF family. In terms of assembly, homodimer. It depends on adenosylcob(III)alamin as a cofactor. Mg(2+) serves as cofactor.

It carries out the reaction 2-methylpropanoyl-CoA = butanoyl-CoA. The catalysed reaction is GTP + H2O = GDP + phosphate + H(+). Catalyzes the reversible interconversion of isobutyryl-CoA and n-butyryl-CoA, using radical chemistry. Also exhibits GTPase activity, associated with its G-protein domain (MeaI) that functions as a chaperone that assists cofactor delivery and proper holo-enzyme assembly. Does not exhibit methylmalonyl-CoA mutase (MCM) activity. The polypeptide is Fused isobutyryl-CoA mutase (Paraburkholderia xenovorans (strain LB400)).